The following is a 364-amino-acid chain: Probable dual-specificity RNA methyltransferase RlmN (364 aa).

E107 acts as the Proton acceptor in catalysis. Residues 113 to 346 (HEYGNSVCVT…ATIRREQGSD (234 aa)) enclose the Radical SAM core domain. A disulfide bond links C120 and C351. [4Fe-4S] cluster contacts are provided by C127, C131, and C134. S-adenosyl-L-methionine is bound by residues 177 to 178 (GE), S209, 232 to 234 (SLH), and N308. C351 serves as the catalytic S-methylcysteine intermediate.

This sequence belongs to the radical SAM superfamily. RlmN family. Requires [4Fe-4S] cluster as cofactor.

Its subcellular location is the cytoplasm. The catalysed reaction is adenosine(2503) in 23S rRNA + 2 reduced [2Fe-2S]-[ferredoxin] + 2 S-adenosyl-L-methionine = 2-methyladenosine(2503) in 23S rRNA + 5'-deoxyadenosine + L-methionine + 2 oxidized [2Fe-2S]-[ferredoxin] + S-adenosyl-L-homocysteine. It catalyses the reaction adenosine(37) in tRNA + 2 reduced [2Fe-2S]-[ferredoxin] + 2 S-adenosyl-L-methionine = 2-methyladenosine(37) in tRNA + 5'-deoxyadenosine + L-methionine + 2 oxidized [2Fe-2S]-[ferredoxin] + S-adenosyl-L-homocysteine. Functionally, specifically methylates position 2 of adenine 2503 in 23S rRNA and position 2 of adenine 37 in tRNAs. Confers resistance to some classes of antibiotics. This Staphylococcus carnosus (strain TM300) protein is Probable dual-specificity RNA methyltransferase RlmN.